A 431-amino-acid polypeptide reads, in one-letter code: Lipid storage droplets surface-binding protein 1 (431 aa).

Positions 397-431 are disordered; that stretch reads KVTGSDGGNSNHRSSRRRQDPNHYSATHNNINGVY. Positions 418 to 431 are enriched in polar residues; the sequence is NHYSATHNNINGVY.

The protein belongs to the perilipin family.

Its subcellular location is the cytoplasm. The protein resides in the lipid droplet. Functionally, required for normal deposition of neutral lipids in the oocyte. The sequence is that of Lipid storage droplets surface-binding protein 1 from Drosophila melanogaster (Fruit fly).